The chain runs to 289 residues: 4-diphosphocytidyl-2-C-methyl-D-erythritol kinase (289 aa).

Lys11 is a catalytic residue. Residue Pro95–Ser105 participates in ATP binding. The active site involves Asp137.

The protein belongs to the GHMP kinase family. IspE subfamily.

It carries out the reaction 4-CDP-2-C-methyl-D-erythritol + ATP = 4-CDP-2-C-methyl-D-erythritol 2-phosphate + ADP + H(+). Its pathway is isoprenoid biosynthesis; isopentenyl diphosphate biosynthesis via DXP pathway; isopentenyl diphosphate from 1-deoxy-D-xylulose 5-phosphate: step 3/6. Catalyzes the phosphorylation of the position 2 hydroxy group of 4-diphosphocytidyl-2C-methyl-D-erythritol. The chain is 4-diphosphocytidyl-2-C-methyl-D-erythritol kinase from Aeromonas salmonicida (strain A449).